The chain runs to 394 residues: Actin-related protein 2 (394 aa).

Residues 160-162 (GDG), 214-218 (RMIKE), and 305-310 (GGSTMY) each bind ATP.

It belongs to the actin family. ARP2 subfamily. Component of the Arp2/3 complex composed of ACTR2/ARP2, ACTR3/ARP3, ARPC1B/p41-ARC, ARPC2/p34-ARC, ARPC3/p21-ARC, ARPC4/p20-ARC and ARPC5/p16-ARC.

The protein localises to the cytoplasm. It is found in the cytoskeleton. It localises to the cell projection. The protein resides in the nucleus. Its function is as follows. ATP-binding component of the Arp2/3 complex, a multiprotein complex that mediates actin polymerization upon stimulation by nucleation-promoting factor (NPF). The Arp2/3 complex mediates the formation of branched actin networks in the cytoplasm, providing the force for cell motility. Seems to contact the pointed end of the daughter actin filament. In addition to its role in the cytoplasmic cytoskeleton, the Arp2/3 complex also promotes actin polymerization in the nucleus, thereby regulating gene transcription and repair of damaged DNA. The Arp2/3 complex promotes homologous recombination (HR) repair in response to DNA damage by promoting nuclear actin polymerization, leading to drive motility of double-strand breaks (DSBs). The chain is Actin-related protein 2 (ACTR2) from Gallus gallus (Chicken).